The sequence spans 652 residues: Acetyl-coenzyme A synthetase (652 aa).

CoA contacts are provided by residues 191–194, Thr311, and Asn335; that span reads RAGR. ATP-binding positions include 387 to 389, 411 to 416, Asp500, and Arg515; these read GEP and DTWWQT. Ser523 contributes to the CoA binding site. Arg526 lines the ATP pocket. Positions 537, 539, and 542 each coordinate Mg(2+). Arg584 contacts CoA. At Lys609 the chain carries N6-acetyllysine.

Belongs to the ATP-dependent AMP-binding enzyme family. Mg(2+) serves as cofactor. In terms of processing, acetylated. Deacetylation by the SIR2-homolog deacetylase activates the enzyme.

It carries out the reaction acetate + ATP + CoA = acetyl-CoA + AMP + diphosphate. Catalyzes the conversion of acetate into acetyl-CoA (AcCoA), an essential intermediate at the junction of anabolic and catabolic pathways. Acs undergoes a two-step reaction. In the first half reaction, Acs combines acetate with ATP to form acetyl-adenylate (AcAMP) intermediate. In the second half reaction, it can then transfer the acetyl group from AcAMP to the sulfhydryl group of CoA, forming the product AcCoA. Its function is as follows. Enables the cell to use acetate during aerobic growth to generate energy via the TCA cycle, and biosynthetic compounds via the glyoxylate shunt. Acetylates CheY, the response regulator involved in flagellar movement and chemotaxis. The chain is Acetyl-coenzyme A synthetase from Serratia proteamaculans (strain 568).